The following is a 58-amino-acid chain: UPF0391 membrane protein Sden_3712 (58 aa).

Transmembrane regions (helical) follow at residues 6–26 and 27–47; these read LTFLVIALVAGVLGFTGIAGA and AAGIAKIIFFVFVVLLLISLV.

It belongs to the UPF0391 family.

It localises to the cell membrane. In Shewanella denitrificans (strain OS217 / ATCC BAA-1090 / DSM 15013), this protein is UPF0391 membrane protein Sden_3712.